The primary structure comprises 353 residues: Photosystem II protein D1 (353 aa).

Position 2 is an N-acetylthreonine (Thr2). The residue at position 2 (Thr2) is a Phosphothreonine. 3 helical membrane-spanning segments follow: residues 29–46, 118–133, and 142–156; these read YIGWFGVLMIPTLLTATS, HFLLGVACYMGREWEL, and WIAVAYSAPVAAATA. A chlorophyll a-binding site is contributed by His118. Tyr126 is a binding site for pheophytin a. 2 residues coordinate [CaMn4O5] cluster: Asp170 and Glu189. The chain crosses the membrane as a helical span at residues 197-218; that stretch reads FHMLGVAGVFGSSLFSAMHGSL. His198 provides a ligand contact to chlorophyll a. A quinone is bound by residues His215 and 264–265; that span reads SF. Residue His215 coordinates Fe cation. Fe cation is bound at residue His272. Residues 274-288 form a helical membrane-spanning segment; sequence FLAAWPVVGIWFTAL. Residues His332, Glu333, Asp342, and Ala344 each coordinate [CaMn4O5] cluster. A propeptide spanning residues 345–353 is cleaved from the precursor; the sequence is AMEAPSVNG.

Belongs to the reaction center PufL/M/PsbA/D family. PSII is composed of 1 copy each of membrane proteins PsbA, PsbB, PsbC, PsbD, PsbE, PsbF, PsbH, PsbI, PsbJ, PsbK, PsbL, PsbM, PsbT, PsbX, PsbY, PsbZ, Psb30/Ycf12, at least 3 peripheral proteins of the oxygen-evolving complex and a large number of cofactors. It forms dimeric complexes. The D1/D2 heterodimer binds P680, chlorophylls that are the primary electron donor of PSII, and subsequent electron acceptors. It shares a non-heme iron and each subunit binds pheophytin, quinone, additional chlorophylls, carotenoids and lipids. D1 provides most of the ligands for the Mn4-Ca-O5 cluster of the oxygen-evolving complex (OEC). There is also a Cl(-1) ion associated with D1 and D2, which is required for oxygen evolution. The PSII complex binds additional chlorophylls, carotenoids and specific lipids. is required as a cofactor. Tyr-161 forms a radical intermediate that is referred to as redox-active TyrZ, YZ or Y-Z. Post-translationally, C-terminally processed by CTPA; processing is essential to allow assembly of the oxygen-evolving complex and thus photosynthetic growth.

It localises to the plastid. The protein resides in the chloroplast thylakoid membrane. It carries out the reaction 2 a plastoquinone + 4 hnu + 2 H2O = 2 a plastoquinol + O2. Functionally, photosystem II (PSII) is a light-driven water:plastoquinone oxidoreductase that uses light energy to abstract electrons from H(2)O, generating O(2) and a proton gradient subsequently used for ATP formation. It consists of a core antenna complex that captures photons, and an electron transfer chain that converts photonic excitation into a charge separation. The D1/D2 (PsbA/PsbD) reaction center heterodimer binds P680, the primary electron donor of PSII as well as several subsequent electron acceptors. The chain is Photosystem II protein D1 from Vigna unguiculata (Cowpea).